The following is a 444-amino-acid chain: E3 ubiquitin-protein ligase APD2 (444 aa).

The span at 1 to 15 (MSLPDSLPSSSSSPP) shows a compositional bias: low complexity. A disordered region spans residues 1–41 (MSLPDSLPSSSSSPPVTREETGFHRFEHHGNDSGFDHRDRP). Basic and acidic residues predominate over residues 17-41 (TREETGFHRFEHHGNDSGFDHRDRP). 2 helical membrane passes run 74-94 (VVVV…GLYG) and 312-332 (IAYI…SSLF). The segment at 393 to 432 (CAICYDAPRDCFFLSCGHCVACFQCGTRIAETSGFCPVCR) adopts an RING-type zinc-finger fold.

In terms of assembly, interacts with At1g78040, At1g10650, VHA-c4/AVAP4, VHA-c''2/VMA16 and TUFA. As to expression, expressed in the shoot apical meristems (SAM), root tips, pollen and inflorescences.

It localises to the endomembrane system. The enzyme catalyses S-ubiquitinyl-[E2 ubiquitin-conjugating enzyme]-L-cysteine + [acceptor protein]-L-lysine = [E2 ubiquitin-conjugating enzyme]-L-cysteine + N(6)-ubiquitinyl-[acceptor protein]-L-lysine.. Its pathway is protein modification; protein ubiquitination. Exhibits E2-dependent E3 ligase activity. Involved in pollen mitosis II (PMII) regulation during male gametogenesis. This chain is E3 ubiquitin-protein ligase APD2, found in Arabidopsis thaliana (Mouse-ear cress).